A 145-amino-acid polypeptide reads, in one-letter code: MVKSARQGAGGFWRDFKDFILRGNVVDLAVAVVIGGAFTSIVNAFVAWLMAVLLQPVLDQAGVSQLQDLPLGLGELVIAIINFLIIAFVIFLIIKAIEKMQRKKAVEEEIVAEAQPDPVLEAQTNLTDSINRLITTLENQQSSSQ.

A run of 2 helical transmembrane segments spans residues 30–50 (VAVV…AWLM) and 74–94 (GELV…FLII).

Belongs to the MscL family. As to quaternary structure, homopentamer.

It is found in the cell inner membrane. In terms of biological role, channel that opens in response to stretch forces in the membrane lipid bilayer. May participate in the regulation of osmotic pressure changes within the cell. This Synechocystis sp. (strain ATCC 27184 / PCC 6803 / Kazusa) protein is Large-conductance mechanosensitive channel.